The chain runs to 283 residues: Lipoyl synthase (283 aa).

[4Fe-4S] cluster-binding residues include Cys-35, Cys-40, Cys-46, Cys-61, Cys-65, Cys-68, and Ser-273. In terms of domain architecture, Radical SAM core spans Phe-47–Ala-262.

Belongs to the radical SAM superfamily. Lipoyl synthase family. [4Fe-4S] cluster serves as cofactor.

The protein resides in the cytoplasm. It carries out the reaction [[Fe-S] cluster scaffold protein carrying a second [4Fe-4S](2+) cluster] + N(6)-octanoyl-L-lysyl-[protein] + 2 oxidized [2Fe-2S]-[ferredoxin] + 2 S-adenosyl-L-methionine + 4 H(+) = [[Fe-S] cluster scaffold protein] + N(6)-[(R)-dihydrolipoyl]-L-lysyl-[protein] + 4 Fe(3+) + 2 hydrogen sulfide + 2 5'-deoxyadenosine + 2 L-methionine + 2 reduced [2Fe-2S]-[ferredoxin]. Its pathway is protein modification; protein lipoylation via endogenous pathway; protein N(6)-(lipoyl)lysine from octanoyl-[acyl-carrier-protein]: step 2/2. Catalyzes the radical-mediated insertion of two sulfur atoms into the C-6 and C-8 positions of the octanoyl moiety bound to the lipoyl domains of lipoate-dependent enzymes, thereby converting the octanoylated domains into lipoylated derivatives. The sequence is that of Lipoyl synthase from Geobacter metallireducens (strain ATCC 53774 / DSM 7210 / GS-15).